The primary structure comprises 468 residues: ATP synthase subunit beta (468 aa).

155–162 (GGAGVGKT) lines the ATP pocket.

This sequence belongs to the ATPase alpha/beta chains family. In terms of assembly, F-type ATPases have 2 components, CF(1) - the catalytic core - and CF(0) - the membrane proton channel. CF(1) has five subunits: alpha(3), beta(3), gamma(1), delta(1), epsilon(1). CF(0) has three main subunits: a(1), b(2) and c(9-12). The alpha and beta chains form an alternating ring which encloses part of the gamma chain. CF(1) is attached to CF(0) by a central stalk formed by the gamma and epsilon chains, while a peripheral stalk is formed by the delta and b chains.

It localises to the cell membrane. The catalysed reaction is ATP + H2O + 4 H(+)(in) = ADP + phosphate + 5 H(+)(out). Its function is as follows. Produces ATP from ADP in the presence of a proton gradient across the membrane. The catalytic sites are hosted primarily by the beta subunits. The chain is ATP synthase subunit beta from Streptococcus agalactiae serotype Ia (strain ATCC 27591 / A909 / CDC SS700).